A 383-amino-acid polypeptide reads, in one-letter code: Putative transcription factor 282R (383 aa).

This sequence belongs to the IIV-6 282R family.

In terms of biological role, transcription activation. The protein is Putative transcription factor 282R of Acheta domesticus (House cricket).